We begin with the raw amino-acid sequence, 243 residues long: CRISPR-associated endoribonuclease Cas6 (243 aa).

It belongs to the CRISPR-associated endoribonuclease Cas6 family. As to quaternary structure, part of the Csm effector complex that includes at least Cas10(1), Csm2(3), Csm3(5), Csm4(1); the presence of Csm5 and Cas6 may depend on the processing state of precursor crRNA. Csm with a precursor crRNA does not include Csm5, while Cas6, the enzyme probably involved in pre-crRNA processing, is found associated with a subset of the Csm complex that is probably in the process of pre-crRNA maturation. The Csm complex is elongated and slightly twisted with a maximal length of 215 Angstroms and a diameter of 75-80 Angstroms. It has been modeled to have a central protein filamant of Csm3 subunits along which the dsRNA helix of paired crRNA and target RNA binds. The filament is capped at one end by Cas10 and Csm4 and at the other end by Csm5; ssDNA is thought to bind to the N-terminal HD domain of Cas10.

Functionally, CRISPR (clustered regularly interspaced short palindromic repeat) is an adaptive immune system that provides protection against mobile genetic elements (viruses, transposable elements and conjugative plasmids). CRISPR clusters contain spacers, sequences complementary to antecedent mobile elements, and target invading nucleic acids. CRISPR clusters are transcribed and processed into CRISPR RNA (crRNA). The type III-A Csm effector complex binds crRNA and acts as a crRNA-guided RNase, DNase and cyclic oligoadenylate synthase; binding of target RNA cognate to the crRNA is required for all activities. In a heterologous host this Csm effector complex restricts ssRNA phage MS2, suggesting it may target RNA viruses in vivo. Its function is as follows. Csm functions as a non-specific ssDNase. Base-pairing between crRNA and target RNA to form a ternary Csm complex activates a ssDNase activity; target RNA cleavage suppresses the ssDNase, a temporal control that prevents uncontrolled DNA degradation. Viral RNA transcripts probably tether the Csm complex to the viral genome, recruiting Cas10 ssDNA activity which is able to degrade DNA in the transcription bubble, spatially controlling the DNase activity. In terms of biological role, this protein processes pre-crRNA into individual crRNA units. This is CRISPR-associated endoribonuclease Cas6 from Streptococcus thermophilus.